The sequence spans 409 residues: S-adenosylmethionine synthase (409 aa).

Position 15 (histidine 15) interacts with ATP. Aspartate 17 lines the Mg(2+) pocket. Glutamate 43 is a binding site for K(+). Residues glutamate 56 and glutamine 100 each coordinate L-methionine. Positions 100–110 (QSSDIAQGVNE) are flexible loop. ATP is bound by residues 171–173 (DGK), 248–249 (KF), aspartate 257, 263–264 (RK), alanine 280, and lysine 284. Aspartate 257 contributes to the L-methionine binding site. Lysine 288 contacts L-methionine.

It belongs to the AdoMet synthase family. Homotetramer; dimer of dimers. Mg(2+) serves as cofactor. Requires K(+) as cofactor.

Its subcellular location is the cytoplasm. It catalyses the reaction L-methionine + ATP + H2O = S-adenosyl-L-methionine + phosphate + diphosphate. The protein operates within amino-acid biosynthesis; S-adenosyl-L-methionine biosynthesis; S-adenosyl-L-methionine from L-methionine: step 1/1. In terms of biological role, catalyzes the formation of S-adenosylmethionine (AdoMet) from methionine and ATP. The overall synthetic reaction is composed of two sequential steps, AdoMet formation and the subsequent tripolyphosphate hydrolysis which occurs prior to release of AdoMet from the enzyme. The polypeptide is S-adenosylmethionine synthase (Prochlorococcus marinus (strain NATL1A)).